The following is a 316-amino-acid chain: tRNA dimethylallyltransferase (316 aa).

15 to 22 (GPTASGKS) lines the ATP pocket. A substrate-binding site is contributed by 17–22 (TASGKS). The segment at 40–43 (DSRQ) is interaction with substrate tRNA.

It belongs to the IPP transferase family. As to quaternary structure, monomer. Requires Mg(2+) as cofactor.

It carries out the reaction adenosine(37) in tRNA + dimethylallyl diphosphate = N(6)-dimethylallyladenosine(37) in tRNA + diphosphate. In terms of biological role, catalyzes the transfer of a dimethylallyl group onto the adenine at position 37 in tRNAs that read codons beginning with uridine, leading to the formation of N6-(dimethylallyl)adenosine (i(6)A). The polypeptide is tRNA dimethylallyltransferase (Chlorobium limicola (strain DSM 245 / NBRC 103803 / 6330)).